Here is a 125-residue protein sequence, read N- to C-terminus: Succinate dehydrogenase cytochrome b556 subunit (125 aa).

Residues 1-22 (MNAKRPVNLDLTKFHFPPMAIL) lie on the Cytoplasmic side of the membrane. A helical transmembrane segment spans residues 23 to 48 (SIGHRISGFVLFLCMPLMFYLLHRAT). Over 49-65 (ASAESFYHLHQLLLHNG) the chain is Periplasmic. A helical membrane pass occupies residues 66–86 (WIKLAVWIMLSATLFHLFAGI). A heme-binding site is contributed by H81. Over 87-104 (RHLAMDLGFWESVPEGRI) the chain is Cytoplasmic. Residues 105 to 125 (SAYTVFVVSFIAIVLAGVWIW) traverse the membrane as a helical segment.

It belongs to the cytochrome b560 family. Part of an enzyme complex containing four subunits: a flavoprotein, an iron-sulfur protein, plus two membrane-anchoring proteins, SdhC and SdhD. The complex can form homotrimers. Requires heme as cofactor.

It localises to the cell inner membrane. The protein operates within carbohydrate metabolism; tricarboxylic acid cycle. Its function is as follows. Membrane-anchoring subunit of succinate dehydrogenase (SDH). This chain is Succinate dehydrogenase cytochrome b556 subunit (sdhC), found in Coxiella burnetii (strain RSA 493 / Nine Mile phase I).